Here is a 335-residue protein sequence, read N- to C-terminus: Ketol-acid reductoisomerase (NADP(+)) 2 (335 aa).

The KARI N-terminal Rossmann domain maps to 1–180 (MKTYYEKDAN…GCTRAGVIET (180 aa)). NADP(+)-binding positions include 24-27 (YGSQ), R47, S51, and 81-84 (DEQQ). Residue H106 is part of the active site. G132 provides a ligand contact to NADP(+). The 146-residue stretch at 181–326 (TFQEETETDL…AELREMMSWI (146 aa)) folds into the KARI C-terminal knotted domain. The Mg(2+) site is built by D189, E193, E225, and E229. S250 contacts substrate.

It belongs to the ketol-acid reductoisomerase family. It depends on Mg(2+) as a cofactor.

The catalysed reaction is (2R)-2,3-dihydroxy-3-methylbutanoate + NADP(+) = (2S)-2-acetolactate + NADPH + H(+). The enzyme catalyses (2R,3R)-2,3-dihydroxy-3-methylpentanoate + NADP(+) = (S)-2-ethyl-2-hydroxy-3-oxobutanoate + NADPH + H(+). It participates in amino-acid biosynthesis; L-isoleucine biosynthesis; L-isoleucine from 2-oxobutanoate: step 2/4. It functions in the pathway amino-acid biosynthesis; L-valine biosynthesis; L-valine from pyruvate: step 2/4. Its function is as follows. Involved in the biosynthesis of branched-chain amino acids (BCAA). Catalyzes an alkyl-migration followed by a ketol-acid reduction of (S)-2-acetolactate (S2AL) to yield (R)-2,3-dihydroxy-isovalerate. In the isomerase reaction, S2AL is rearranged via a Mg-dependent methyl migration to produce 3-hydroxy-3-methyl-2-ketobutyrate (HMKB). In the reductase reaction, this 2-ketoacid undergoes a metal-dependent reduction by NADPH to yield (R)-2,3-dihydroxy-isovalerate. In Bacillus cereus (strain ATCC 10987 / NRS 248), this protein is Ketol-acid reductoisomerase (NADP(+)) 2.